The sequence spans 352 residues: Transcription factor RSL2 (352 aa).

A compositionally biased stretch (polar residues) spans 160 to 169 (SVTTTKSLTG). Residues 160–277 (SVTTTKSLTG…ASRGAATDPQ (118 aa)) form a disordered region. The segment covering 183 to 192 (KRARVNKRAQ) has biased composition (basic residues). Residues 223-232 (SRQNSSTTFC) show a composition bias toward polar residues. A basic motif region spans residues 272–285 (AATDPQSLYARKRR). Residues 272-321 (AATDPQSLYARKRRERINERLRILQNLVPNGTKVDISTMLEEAVHYVKFL) enclose the bHLH domain. The helix-loop-helix motif stretch occupies residues 286 to 321 (ERINERLRILQNLVPNGTKVDISTMLEEAVHYVKFL).

In terms of assembly, homodimer. Expressed in roots. Expressed in root epidermal hair cells.

Its subcellular location is the nucleus. In terms of biological role, transcription factor involved in the regulation of root hair elongation. Does not seem to be a direct transcriptional target of RHD6 and RSL1. Involved in the regulation of root hair elongation in response to low phosphate. The sequence is that of Transcription factor RSL2 from Arabidopsis thaliana (Mouse-ear cress).